A 293-amino-acid chain; its full sequence is D-alanine--D-alanine ligase (293 aa).

The ATP-grasp domain maps to 98-291; that stretch reads KIIWEQHSLT…FNKLVTSIIN (194 aa). 124–177 contacts ATP; the sequence is NFPLPWAVKPTLEGSSIGISKVDNQMQLNDALMLAWQYAPYALIEQWIKGDEYT. 3 residues coordinate Mg(2+): D245, E258, and N260.

Belongs to the D-alanine--D-alanine ligase family. The cofactor is Mg(2+). Mn(2+) is required as a cofactor.

It is found in the cytoplasm. The catalysed reaction is 2 D-alanine + ATP = D-alanyl-D-alanine + ADP + phosphate + H(+). The protein operates within cell wall biogenesis; peptidoglycan biosynthesis. Functionally, cell wall formation. The polypeptide is D-alanine--D-alanine ligase (Vesicomyosocius okutanii subsp. Calyptogena okutanii (strain HA)).